The following is a 1196-amino-acid chain: MEEDDEFGDLYSDVLQPFQPPVVLPPPPPLPHRSIDLNLRSQDQDVSEPNSAPISRVSDNDAVKLSTQDATRQAIVDGGGDDKDMSFDIEEPDADSTPTIPGLFVTGALPGLATDRGVSQVTTRIEQQVGGGGDGGYGGQGEGDDWDSDSEDDLQIVLNDSSRNVMIGGADRRSRMGDNEDDDDEDDEDPLVIVADTDPNQPMEEQMWGEDGLQGIEGDGKDGGEAGKGSGPGGATGPPKAGYSSHGYHPFHSQFKYVRPGAAPIPGGAASVGGPSSGQVRPPANLGPMAGRGRGDWRPLGMRNASAAQKGFHQPWGSNTAGRGLDFTLPSHKTIFEVDIDSFEEKPWRYPGVEMTDYFNFGLNEESWKDYCKQLDQHRIQTTMQSRIRVYESGRTDQGYDPDLPPELAAATGAQGVPVDSSNLVKPDSVQGDSAKVPANVRPTLPPGRPIPVETGSGERLPSIDTRAPRMRDLDAIIEIVCQDSHEDEPSGENGTDQADSSLPGENVPVETSYVNNKRPDTESAEHSPAQDEPHKNLLKKQDDEISRSTDSGQSFRSSSPVGDRGTRSSSVDREDVGGEAGKDAEMGEELKMSFTSPQSAVQEDDGGESKTERSSESSKARSGSHRDFQQEEDVIQDKHSSRPANNRKQYDNNAPHQSRKNQDRGKEMERTRAASKGGRENSNPHMELDSTYIYSIASREDFDKRKERDVDGAVWRRKEDDPYSRRGGDEGSRKRDREDDPGFRQRGKMRENEIRSKDDQVPSRKHMDDAGMRNIYEPDDHINKRRKDEEYLRRSRPEKNEISYGQRESMSRVKRERDDRLEHQKRDVQHKIRDDFDDHGSLRQRDDIYMQRDGNERLRERDVLDKLKLPHEDGISARGRERQVAVRGHRGSEDRSSRMKDEYKASDKEHVTKDTLRHAKQTKRRDYPGEESSSHHRGHEDFSARTDNIVNNEKKPRQERTGAKIDKFIDTLDGQRLQDRKHKDSRRKIKEQREGTESLSKQGEQNGSSVVTGSKGTNDARNCRSEIPHQPNTAKRHKENASSGDEIHDSKRGRTKLERWASHKEREDAVSAKSSSISSKLEEKENNTNGRLSEPVHGSIGKSRDVTEEKIGHDLADTKDGSEKGPGDRHLDTVEKLKKRSERFKLPMPTEKDTTGVKKMESETLPSAKIEGPVDSEGEYVWDERSCVRIGREYA.

5 disordered regions span residues 1–102 (MEED…TIPG), 117–248 (GVSQ…SHGY), 268–300 (GAASVGGPSSGQVRPPANLGPMAGRGRGDWRPL), 413–472 (GAQG…PRMR), and 485–1174 (SHED…IEGP). Residues 18–31 (FQPPVVLPPPPPLP) are compositionally biased toward pro residues. Residues 117-126 (GVSQVTTRIE) are compositionally biased toward polar residues. Gly residues predominate over residues 129-141 (VGGGGDGGYGGQG). 2 stretches are compositionally biased toward acidic residues: residues 142-154 (EGDDWDSDSEDDL) and 179-190 (NEDDDDEDDEDP). The span at 226 to 236 (AGKGSGPGGAT) shows a compositional bias: gly residues. A compositionally biased stretch (low complexity) spans 268–278 (GAASVGGPSSG). A compositionally biased stretch (basic and acidic residues) spans 518 to 548 (KRPDTESAEHSPAQDEPHKNLLKKQDDEISR). Residues 549–561 (STDSGQSFRSSSP) show a composition bias toward polar residues. 2 stretches are compositionally biased toward basic and acidic residues: residues 565–592 (RGTRSSSVDREDVGGEAGKDAEMGEELK) and 608–641 (GESKTERSSESSKARSGSHRDFQQEEDVIQDKHS). The segment covering 643–657 (RPANNRKQYDNNAPH) has biased composition (polar residues). Composition is skewed to basic and acidic residues over residues 661-673 (KNQDRGKEMERTR), 699-802 (SRED…EKNE), 810-918 (SMSR…DTLR), 925-945 (RRDYPGEESSSHHRGHEDFSA), and 953-971 (NEKKPRQERTGAKIDKFID). 2 short sequence motifs (nuclear localization signal) span residues 704-711 (DKRKERDV) and 734-741 (RKRDREDD). Residues 998-1021 (ESLSKQGEQNGSSVVTGSKGTNDA) are compositionally biased toward polar residues. 3 stretches are compositionally biased toward basic and acidic residues: residues 1046-1071 (DEIHDSKRGRTKLERWASHKEREDAV), 1103-1137 (KSRDVTEEKIGHDLADTKDGSEKGPGDRHLDTVEK), and 1151-1163 (TEKDTTGVKKMES).

The protein belongs to the FIP1 family. Component of the cleavage and polyadenylation specificity factor (CPSF) complex. Forms a complex with cleavage and polyadenylation specificity factor (CPSF) subunits CFIS1, CFIS2, CPSF30, CSTF50, CSTF64, CSTF77, FIPS3, PABN1, PABN2, PABN3, PAPS4, CFIM25 and PABN1. Binds RNA. Expressed in leaves, stems, flower tissues and roots.

The protein localises to the nucleus. Essential gene. Component of the cleavage and polyadenylation specificity factor (CPSF) complex that plays a key role in pre-mRNA 3'-end formation, recognizing the AAUAAA signal sequence and interacting with poly(A) polymerase and other factors to bring about cleavage and poly(A) addition. FIP1L1 contributes to poly(A) site recognition and stimulates poly(A) addition. Binds to U-rich RNA sequence elements surrounding the poly(A) site. May act to tether poly(A) polymerase to the CPSF complex. The protein is FIP1[V]-like protein of Arabidopsis thaliana (Mouse-ear cress).